The primary structure comprises 635 residues: MGVVTVPESNKQSVAAKRAFRPSSSIRHTPQWPVSDVTSDLTIEVGSATFSLHKFPLVSRSGRIRKLVLESKDTNLNLAAVPGGSESFELAAKFCYGVGVQYNSSNIAALRCVAHYLEMTEDLSEKNLEARTEAYLKDSIFNDISNSITVLHSCERLLPVAEEINLVGRLVNAIAVNACKEQLASGLLKLDQSFSCGVPETAKPCDWWGRSLPILKLDFFQRVLSAMKSKGLNHDIISDILMSYARKSLQIIREPNLVKSDSDLQRKQRIVLEAVVGLLPTQANKSSIPISFLSSLLKTAIGSGTSVSCRSDLERRISHLLDQAILEDILIPANIGAMYDTDSVQRIFSMFLNLDECEYRDDDDDEEDAVDESEMAMYDFEGAESPKQSSIFKVSKLMDSYLAEVALDSSLPPSKFIALAELLPDHARVVCDGLYRAVDIFLKVHPHMKDSERYRLCKTVSCKKLSQDASSHAAQNERLPVQIAVQVLFYEQTRLKNAMTSGGGTGGSNQSQFFLFPNRSGSGMASGAISPRDNYASVRRENRELRLEVARMRMRLTDLEKDHVSMKRDFVKPQSRRRRYGMLRKLSRGLNKLNAIVLRFRSSQSVASSGKKHTEEKTNSERRFMFQKRRCHSVS.

Positions 39–104 constitute a BTB domain; sequence SDLTIEVGSA…CYGVGVQYNS (66 aa). Residues 206–494 enclose the NPH3 domain; that stretch reads DWWGRSLPIL…VQVLFYEQTR (289 aa). Phosphotyrosine is present on Tyr-435. The tract at residues 604-635 is disordered; that stretch reads QSVASSGKKHTEEKTNSERRFMFQKRRCHSVS. Positions 612–624 are enriched in basic and acidic residues; it reads KHTEEKTNSERRF. Basic residues predominate over residues 625–635; the sequence is MFQKRRCHSVS.

The protein belongs to the NPH3 family.

The protein operates within protein modification; protein ubiquitination. May act as a substrate-specific adapter of an E3 ubiquitin-protein ligase complex (CUL3-RBX1-BTB) which mediates the ubiquitination and subsequent proteasomal degradation of target proteins. The chain is BTB/POZ domain-containing protein SETH6 (SETH6) from Arabidopsis thaliana (Mouse-ear cress).